Consider the following 819-residue polypeptide: DNA topoisomerase 4 subunit A (819 aa).

The Topo IIA-type catalytic domain maps to 30-496; sequence LPDIRDGLKP…QIIEIDTASL (467 aa). The active-site O-(5'-phospho-DNA)-tyrosine intermediate is Y118.

The protein belongs to the type II topoisomerase GyrA/ParC subunit family. ParC type 2 subfamily. Heterotetramer composed of ParC and ParE.

Its subcellular location is the cell membrane. It carries out the reaction ATP-dependent breakage, passage and rejoining of double-stranded DNA.. Its function is as follows. Topoisomerase IV is essential for chromosome segregation. It relaxes supercoiled DNA. Performs the decatenation events required during the replication of a circular DNA molecule. This Streptococcus pyogenes serotype M18 (strain MGAS8232) protein is DNA topoisomerase 4 subunit A.